The primary structure comprises 456 residues: Signal transduction histidine-protein kinase ArlS (456 aa).

2 helical membrane passes run 13-33 and 157-177; these read LITT…IIFF and IVAL…SYIF. Positions 179 to 232 constitute an HAMP domain; sequence SQITKPIVTMSNKMNQIRRDGFQNKLELTTNYEETDNLIDTFNEMMYQIEESFN. Positions 240–456 constitute a Histidine kinase domain; sequence DASHELRTPL…TFKISFPVLN (217 aa). Position 243 is a phosphohistidine; by autocatalysis (His243).

Autophosphorylated.

Its subcellular location is the cell membrane. The catalysed reaction is ATP + protein L-histidine = ADP + protein N-phospho-L-histidine.. Member of the two-component regulatory system ArlS/ArlR. ArlS probably functions as a sensor protein kinase which is autophosphorylated at a histidine residue and transfers its phosphate group to ArlR. This is Signal transduction histidine-protein kinase ArlS (arlS) from Staphylococcus epidermidis (strain ATCC 12228 / FDA PCI 1200).